Consider the following 516-residue polypeptide: Maturase K (516 aa).

The protein belongs to the intron maturase 2 family. MatK subfamily.

It localises to the plastid. The protein localises to the chloroplast. Usually encoded in the trnK tRNA gene intron. Probably assists in splicing its own and other chloroplast group II introns. The chain is Maturase K from Colchicum speciosum (Giant meadow saffron).